The following is a 707-amino-acid chain: Anti-sigma-I factor RsgI9 (707 aa).

At 1-149 (MKITGVIVRI…NFSRISNIKN (149 aa)) the chain is on the cytoplasmic side. The RsgI N-terminal anti-sigma domain maps to 3-50 (ITGVIVRIHKDRAIIRTDDNRLLAVKRHNDMMVGQIVSFDANEVHKVE). The helical transmembrane segment at 150–172 (FSRIASIAAAFVLIFLFGRNVML) threads the bilayer. Topologically, residues 173-707 (NNSSDSEYAY…DSEEKKEYIQ (535 aa)) are extracellular. The stretch at 256 to 283 (NDKNKKTRDKREEKIDELKETIEQGIEA) forms a coiled coil. Residues 345 to 392 (EDNTELAPTPTPVPPETPEPTPTPTASEATPSNSPVESKSPEAVPELG) form a disordered region. Pro residues predominate over residues 353–367 (TPTPVPPETPEPTPT). Residues 368–379 (PTASEATPSNSP) are compositionally biased toward low complexity.

The protein localises to the cell membrane. This is Anti-sigma-I factor RsgI9 from Acetivibrio thermocellus (strain ATCC 27405 / DSM 1237 / JCM 9322 / NBRC 103400 / NCIMB 10682 / NRRL B-4536 / VPI 7372) (Clostridium thermocellum).